We begin with the raw amino-acid sequence, 353 residues long: MTAILERREATSRWAQFCNWITSTENRLYIGWFGVIMIPCLLTATSVFIIAFIAAPPVDIDGIREPVSGSLLYGNNIISGAVIPTSNAIGLHFYPIWEAASLDEWLYNGGPYQLIVCHFLLGVACYMGREWELSFRLGMRPWIAVAYSAPVAAATAVFLIYPIGQGSFSDGMPLGISGTFNFMIVFQAEHNILMHPFHMLGVAGVFGGSLFSAMHGSLVTSSLIRETTENESANAGYKFGQEEETYNIVAAHGYFGRLIFQYASFNNSRSLHFFLAAWPVVGIWFTALGLSTMAFNLNGLNFNQSVVDSQGRVINTWADIINRANLGMEVMHERNAHNFPLDLASVEAPSVNA.

The residue at position 2 (Thr-2) is an N-acetylthreonine. Residue Thr-2 is modified to Phosphothreonine. 3 helical membrane-spanning segments follow: residues 29–46 (YIGWFGVIMIPCLLTATS), 118–133 (HFLLGVACYMGREWEL), and 142–156 (WIAVAYSAPVAAATA). His-118 is a chlorophyll a binding site. Tyr-126 provides a ligand contact to pheophytin a. Residues Asp-170 and Glu-189 each contribute to the [CaMn4O5] cluster site. The helical transmembrane segment at 197–218 (FHMLGVAGVFGGSLFSAMHGSL) threads the bilayer. A chlorophyll a-binding site is contributed by His-198. A quinone-binding positions include His-215 and 264 to 265 (SF). Position 215 (His-215) interacts with Fe cation. His-272 is a binding site for Fe cation. A helical membrane pass occupies residues 274–288 (FLAAWPVVGIWFTAL). [CaMn4O5] cluster-binding residues include His-332, Glu-333, Asp-342, and Ala-344. The propeptide occupies 345–353 (SVEAPSVNA).

Belongs to the reaction center PufL/M/PsbA/D family. In terms of assembly, PSII is composed of 1 copy each of membrane proteins PsbA, PsbB, PsbC, PsbD, PsbE, PsbF, PsbH, PsbI, PsbJ, PsbK, PsbL, PsbM, PsbT, PsbX, PsbY, PsbZ, Psb30/Ycf12, at least 3 peripheral proteins of the oxygen-evolving complex and a large number of cofactors. It forms dimeric complexes. The D1/D2 heterodimer binds P680, chlorophylls that are the primary electron donor of PSII, and subsequent electron acceptors. It shares a non-heme iron and each subunit binds pheophytin, quinone, additional chlorophylls, carotenoids and lipids. D1 provides most of the ligands for the Mn4-Ca-O5 cluster of the oxygen-evolving complex (OEC). There is also a Cl(-1) ion associated with D1 and D2, which is required for oxygen evolution. The PSII complex binds additional chlorophylls, carotenoids and specific lipids. is required as a cofactor. Post-translationally, tyr-161 forms a radical intermediate that is referred to as redox-active TyrZ, YZ or Y-Z. In terms of processing, C-terminally processed by CTPA; processing is essential to allow assembly of the oxygen-evolving complex and thus photosynthetic growth.

It localises to the plastid. The protein localises to the chloroplast thylakoid membrane. It catalyses the reaction 2 a plastoquinone + 4 hnu + 2 H2O = 2 a plastoquinol + O2. Functionally, photosystem II (PSII) is a light-driven water:plastoquinone oxidoreductase that uses light energy to abstract electrons from H(2)O, generating O(2) and a proton gradient subsequently used for ATP formation. It consists of a core antenna complex that captures photons, and an electron transfer chain that converts photonic excitation into a charge separation. The D1/D2 (PsbA/PsbD) reaction center heterodimer binds P680, the primary electron donor of PSII as well as several subsequent electron acceptors. The polypeptide is Photosystem II protein D1 (Oltmannsiellopsis viridis (Marine flagellate)).